Consider the following 694-residue polypeptide: Inactive protein-arginine deiminase type-6 (694 aa).

Residues S10 and S446 each carry the phosphoserine modification.

The protein belongs to the protein arginine deiminase family. Homodimers. Associates with alpha-tubulin. In terms of processing, phosphorylation at Ser-10, possibly by RSK-type kinases, and Ser-446 creates binding sites for 14-3-3 proteins. In terms of tissue distribution, highly expressed in oocytes and weakly expressed in other somatic tissues.

Its subcellular location is the cytoplasm. It localises to the cytoplasmic vesicle. The protein resides in the secretory vesicle. It is found in the cortical granule. The protein localises to the nucleus. Structural constituent of cytoplasmic lattices, which plays a key role in early embryonic development. Cytoplasmic lattices consist in fibrous structures found in the cytoplasm of oocytes and preimplantation embryos. They are required to store maternal proteins critical for embryonic development, such as ribosomal proteins and proteins that control epigenetic reprogramming of the preimplantation embryo, and prevent their degradation or activation. In contrast to other members of the family, does not show protein-arginine deiminase activity due to its inability to bind Ca(2+). The chain is Inactive protein-arginine deiminase type-6 from Homo sapiens (Human).